The following is a 139-amino-acid chain: Putative nickel-responsive regulator (139 aa).

Positions 79, 90, 92, and 98 each coordinate Ni(2+).

Belongs to the transcriptional regulatory CopG/NikR family. Ni(2+) serves as cofactor.

In terms of biological role, transcriptional regulator. The chain is Putative nickel-responsive regulator from Solidesulfovibrio magneticus (strain ATCC 700980 / DSM 13731 / RS-1) (Desulfovibrio magneticus).